A 370-amino-acid polypeptide reads, in one-letter code: Aminomethyltransferase (370 aa).

This sequence belongs to the GcvT family. The glycine cleavage system is composed of four proteins: P, T, L and H.

It catalyses the reaction N(6)-[(R)-S(8)-aminomethyldihydrolipoyl]-L-lysyl-[protein] + (6S)-5,6,7,8-tetrahydrofolate = N(6)-[(R)-dihydrolipoyl]-L-lysyl-[protein] + (6R)-5,10-methylene-5,6,7,8-tetrahydrofolate + NH4(+). In terms of biological role, the glycine cleavage system catalyzes the degradation of glycine. The chain is Aminomethyltransferase from Clostridium botulinum (strain Okra / Type B1).